A 467-amino-acid polypeptide reads, in one-letter code: Transcriptional modulator WTM2 (467 aa).

The segment covering 1–12 (MAKSKSSQGASG) has biased composition (low complexity). 2 disordered regions span residues 1-22 (MAKS…PSLY) and 84-121 (TFYD…AFQD). Residues 87–100 (DDDDDDDNDDDDEE) show a composition bias toward acidic residues. 3 WD repeats span residues 244-282 (PGTN…KPLW), 287-327 (PKNG…LATT), and 349-389 (SGGD…SRND).

Its function is as follows. Transcriptional modulator with roles in meiotic regulation and silencing. The polypeptide is Transcriptional modulator WTM2 (WTM2) (Saccharomyces cerevisiae (strain ATCC 204508 / S288c) (Baker's yeast)).